The following is a 498-amino-acid chain: Putative phosphotransferase 057R (498 aa).

This Dryophytes versicolor (chameleon treefrog) protein is Putative phosphotransferase 057R.